The primary structure comprises 123 residues: Small ribosomal subunit protein uS12 (123 aa).

3-methylthioaspartic acid is present on D89. The interval 100–123 (GSLDTSGVSDRKQGRSKYGTKRPK) is disordered. Over residues 113–123 (GRSKYGTKRPK) the composition is skewed to basic residues.

It belongs to the universal ribosomal protein uS12 family. As to quaternary structure, part of the 30S ribosomal subunit. Contacts proteins S8 and S17. May interact with IF1 in the 30S initiation complex.

Functionally, with S4 and S5 plays an important role in translational accuracy. In terms of biological role, interacts with and stabilizes bases of the 16S rRNA that are involved in tRNA selection in the A site and with the mRNA backbone. Located at the interface of the 30S and 50S subunits, it traverses the body of the 30S subunit contacting proteins on the other side and probably holding the rRNA structure together. The combined cluster of proteins S8, S12 and S17 appears to hold together the shoulder and platform of the 30S subunit. This Saccharophagus degradans (strain 2-40 / ATCC 43961 / DSM 17024) protein is Small ribosomal subunit protein uS12.